Here is a 108-residue protein sequence, read N- to C-terminus: UPF0060 membrane protein KPK_2870 (108 aa).

4 helical membrane passes run 6–26 (LLFF…WLWL), 29–49 (GATP…VWLL), 61–81 (AAYG…VDGV), and 86–106 (YDWA…AGWG).

Belongs to the UPF0060 family.

It is found in the cell inner membrane. This is UPF0060 membrane protein KPK_2870 from Klebsiella pneumoniae (strain 342).